The primary structure comprises 547 residues: Threonine synthase (547 aa).

Lys-117 is subject to N6-(pyridoxal phosphate)lysine. Gly-272, Asn-273, Phe-274, Asp-276, and Thr-471 together coordinate pyridoxal 5'-phosphate.

The protein belongs to the threonine synthase family. The cofactor is pyridoxal 5'-phosphate.

The catalysed reaction is O-phospho-L-homoserine + H2O = L-threonine + phosphate. It participates in amino-acid biosynthesis; L-threonine biosynthesis; L-threonine from L-aspartate: step 5/5. Its function is as follows. Catalyzes the gamma-elimination of phosphate from L-phosphohomoserine and the beta-addition of water to produce L-threonine. This Cryptococcus neoformans var. grubii serotype A (strain H99 / ATCC 208821 / CBS 10515 / FGSC 9487) (Filobasidiella neoformans var. grubii) protein is Threonine synthase.